The primary structure comprises 348 residues: tRNA N6-adenosine threonylcarbamoyltransferase (348 aa).

Positions 115 and 119 each coordinate Fe cation. Residues leucine 138 to glycine 142, aspartate 171, glycine 184, and asparagine 278 each bind substrate. Fe cation is bound at residue aspartate 306.

This sequence belongs to the KAE1 / TsaD family. Fe(2+) serves as cofactor.

The protein resides in the cytoplasm. It carries out the reaction L-threonylcarbamoyladenylate + adenosine(37) in tRNA = N(6)-L-threonylcarbamoyladenosine(37) in tRNA + AMP + H(+). Functionally, required for the formation of a threonylcarbamoyl group on adenosine at position 37 (t(6)A37) in tRNAs that read codons beginning with adenine. Is involved in the transfer of the threonylcarbamoyl moiety of threonylcarbamoyl-AMP (TC-AMP) to the N6 group of A37, together with TsaE and TsaB. TsaD likely plays a direct catalytic role in this reaction. In Methylibium petroleiphilum (strain ATCC BAA-1232 / LMG 22953 / PM1), this protein is tRNA N6-adenosine threonylcarbamoyltransferase.